A 59-amino-acid polypeptide reads, in one-letter code: Large ribosomal subunit protein uL30 (59 aa).

Belongs to the universal ribosomal protein uL30 family. Part of the 50S ribosomal subunit.

The sequence is that of Large ribosomal subunit protein uL30 from Nocardia farcinica (strain IFM 10152).